A 340-amino-acid chain; its full sequence is tRNA-cytidine(32) 2-sulfurtransferase (340 aa).

Residues Ser-74 to Ser-79 carry the PP-loop motif motif. [4Fe-4S] cluster is bound by residues Cys-149, Cys-152, and Cys-240.

The protein belongs to the TtcA family. As to quaternary structure, homodimer. Mg(2+) is required as a cofactor. It depends on [4Fe-4S] cluster as a cofactor.

It is found in the cytoplasm. The catalysed reaction is cytidine(32) in tRNA + S-sulfanyl-L-cysteinyl-[cysteine desulfurase] + AH2 + ATP = 2-thiocytidine(32) in tRNA + L-cysteinyl-[cysteine desulfurase] + A + AMP + diphosphate + H(+). Its pathway is tRNA modification. Its function is as follows. Catalyzes the ATP-dependent 2-thiolation of cytidine in position 32 of tRNA, to form 2-thiocytidine (s(2)C32). The sulfur atoms are provided by the cysteine/cysteine desulfurase (IscS) system. The polypeptide is tRNA-cytidine(32) 2-sulfurtransferase (Burkholderia ambifaria (strain MC40-6)).